The sequence spans 89 residues: Dynein light chain 1, cytoplasmic (89 aa).

N6-acetyllysine is present on lysine 36. A Glycyl lysine isopeptide (Lys-Gly) (interchain with G-Cter in SUMO2) cross-link involves residue lysine 43. Positions 67-89 (THETKHFIYFYLGQVAILLFKSG) are interaction with ESR1. Serine 88 bears the Phosphoserine mark.

It belongs to the dynein light chain family. Homodimer. Monomer; the monomeric form is incapable of binding to target proteins. The cytoplasmic dynein 1 complex consists of two catalytic heavy chains (HCs) and a number of non-catalytic subunits presented by intermediate chains (ICs), light intermediate chains (LICs) and light chains (LCs); the composition seems to vary in respect to the IC, LIC and LC composition. The heavy chain homodimer serves as a scaffold for the probable homodimeric assembly of the respective non-catalytic subunits. The ICs and LICs bind directly to the HC dimer and the LCs assemble on the IC dimer. Interacts with TXNDC17. Interacts with WWC1 and ESR1. The WWC1-DYNLL1 interaction is mandatory for the recruitment and transactivation functions of ESR1 or DYNLL1 to the target chromatin. Interacts with BCL2L11. Interacts with BCL2; the interaction is greatly enhanced in the nucleus and in mitochondria upon induction of apoptosis. Interacts with PAK1; the interaction requires dimeric DYNLL1. Interacts with MYZAP. Part of an astrin (SPAG5)-kinastrin (SKAP) complex containing KNSTRN, SPAG5, PLK1, DYNLL1 and SGO2. Interacts with ATMIN; this interaction inhibits ATMIN transcriptional activity and hence may play a role in a feedback loop whereby DYNLL1 inhibits transactivation of its own promoter by ATMIN. Interacts with NEK9 (not phosphorylated at 'Ser-944'). Interacts with BICD2. Interacts with BCAS1. Interacts with Basson/BSN. Interacts with HDAC6. Interacts with TPPP. Interacts with AMBRA1 (via TQT motifs); tethering AMBRA1 to the cytoskeleton. Interacts with FAM83D/CHICA (via C-terminus). Interacts with HMMR, SPAG5/Astrin and KNSTRN/Kinastrin. Interacts with TLK2. Interacts with NOS1. Interacts with WWC1, WWC2 and WWC3. Interacts with MRE11; inhibiting MRE11 homodimerization and activity. As to quaternary structure, (Microbial infection) Interacts with bovine immunodeficiency virus Gag protein; this interaction is critical for intracellular microtubule-dependent viral genome transport. Phosphorylation at Ser-88 promotes recruitment to DNA double-strand breaks (DSBs) by TP53BP1 and ability to inhibit MRE11.

The protein resides in the cytoplasm. Its subcellular location is the cytoskeleton. It is found in the microtubule organizing center. It localises to the centrosome. The protein localises to the chromosome. The protein resides in the nucleus. Its subcellular location is the mitochondrion. Functionally, acts as one of several non-catalytic accessory components of the cytoplasmic dynein 1 complex that are thought to be involved in linking dynein to cargos and to adapter proteins that regulate dynein function. Cytoplasmic dynein 1 acts as a motor for the intracellular retrograde motility of vesicles and organelles along microtubules. May play a role in changing or maintaining the spatial distribution of cytoskeletal structures. In addition to its role in cytoskeleton and transport, acts as a protein-protein adapter, which inhibits and/or sequesters target proteins. Involved in the response to DNA damage by acting as a key regulator of DNA end resection: when phosphorylated at Ser-88, recruited to DNA double-strand breaks (DSBs) by TP53BP1 and acts by disrupting MRE11 dimerization, thereby inhibiting DNA end resection. In a subset of DSBs, DYNLL1 remains unphosphorylated and promotes the recruitment of the Shieldin complex. Binds and inhibits the catalytic activity of neuronal nitric oxide synthase/NOS1. Promotes transactivation functions of ESR1 and plays a role in the nuclear localization of ESR1. Regulates apoptotic activities of BCL2L11 by sequestering it to microtubules. Upon apoptotic stimuli the BCL2L11-DYNLL1 complex dissociates from cytoplasmic dynein and translocates to mitochondria and sequesters BCL2 thus neutralizing its antiapoptotic activity. The sequence is that of Dynein light chain 1, cytoplasmic (DYNLL1) from Bos taurus (Bovine).